The primary structure comprises 451 residues: MNTNNILETIKMIEEEKLDVRTITMGISLLDCIDPDGDKARIKIYDKITKSAEHLVEVGRQIETEFGIPIVNKRVSITPMSIIAGATNETSYVEFARTLDRAAETLGIDFLGGFSALVQKGCTKGDKILISSIPEALAVTKKVCASVNVGCTKSGINMNAVRDMADVIKRTAELTKDQKGFGCAKLVVFANAVEDNPFMAGAFHGVGEAERIINVGVSGPGVVKRALEKVRGASFDVVAETIKQTAFKVTRMGELVANEASRRLDVPFGIVDLSLAPTPAVGDSVAEILEEIGLEQVGTHGTIAALAMLNDAVKKGGVMACSHVGGLSGAFIPVSEDAGMIDAVISGSLNLEKLEGMTCVCSVGLDMIAIPGDTPASTIAGMIADEAAIGVINNKTTAVRIIPAPGCEIGDMVEFGGLLGRAPVMKVNGKSSELFAQRGGRIPAPIHSFKN.

The protein belongs to the UPF0210 family. In terms of assembly, homodimer.

The sequence is that of UPF0210 protein Cbei_2352 from Clostridium beijerinckii (strain ATCC 51743 / NCIMB 8052) (Clostridium acetobutylicum).